Here is a 364-residue protein sequence, read N- to C-terminus: Fructose-bisphosphate aldolase C (364 aa).

The residue at position 5 (Y5) is a Phosphotyrosine. S36, S39, and S45 each carry phosphoserine. R56 serves as a coordination point for substrate. K111 is modified (N6-acetyllysine). Position 132 is a phosphoserine (S132). K147 contributes to the substrate binding site. The active-site Proton acceptor is the E188. The Schiff-base intermediate with dihydroxyacetone-P role is filled by K230.

This sequence belongs to the class I fructose-bisphosphate aldolase family. In terms of assembly, homotetramer. Interacts with ATP6V1E1. May interact with PLD2.

The catalysed reaction is beta-D-fructose 1,6-bisphosphate = D-glyceraldehyde 3-phosphate + dihydroxyacetone phosphate. It functions in the pathway carbohydrate degradation; glycolysis; D-glyceraldehyde 3-phosphate and glycerone phosphate from D-glucose: step 4/4. This chain is Fructose-bisphosphate aldolase C (ALDOC), found in Homo sapiens (Human).